The primary structure comprises 212 residues: MIVIFLGPPGAGKGTQGKKIAKKIDLPHIAIGDIFRTIIKTSTSEAELINNYVRQGELIPNEIVNQVIKNFLLSSEYKNGYILDGYPRNLEQAKFFESFIKEKIKIIYFDVSGELLIKRILGRYSCKNCGKIYNRYFLQPKTDNVCDVCGSSTFDYRKDDNEEVIKKRIEVYKTETYPLIDYYKNSGNFYIVNGSKNEQEIEIDIQKILKIN.

Gly10–Thr15 serves as a coordination point for ATP. The tract at residues Ala30 to Ile59 is NMP. AMP-binding positions include Arg36, Glu57–Ile59, Gly85–Arg88, and Gln92. Residues Gly122–Asp160 form an LID region. Arg123 contributes to the ATP binding site. Zn(2+) is bound by residues Cys126 and Cys129. Position 132-133 (Ile132–Tyr133) interacts with ATP. Residues Cys146 and Cys149 each contribute to the Zn(2+) site. Residues Arg157 and Arg168 each coordinate AMP. Residue Lys196 participates in ATP binding.

It belongs to the adenylate kinase family. In terms of assembly, monomer.

Its subcellular location is the cytoplasm. It carries out the reaction AMP + ATP = 2 ADP. The protein operates within purine metabolism; AMP biosynthesis via salvage pathway; AMP from ADP: step 1/1. In terms of biological role, catalyzes the reversible transfer of the terminal phosphate group between ATP and AMP. Plays an important role in cellular energy homeostasis and in adenine nucleotide metabolism. This is Adenylate kinase from Rickettsia peacockii (strain Rustic).